The following is a 157-amino-acid chain: Arginine repressor (157 aa).

Belongs to the ArgR family.

Its subcellular location is the cytoplasm. It participates in amino-acid biosynthesis; L-arginine biosynthesis [regulation]. Its function is as follows. Regulates arginine biosynthesis genes. This Lactobacillus delbrueckii subsp. bulgaricus (strain ATCC 11842 / DSM 20081 / BCRC 10696 / JCM 1002 / NBRC 13953 / NCIMB 11778 / NCTC 12712 / WDCM 00102 / Lb 14) protein is Arginine repressor.